We begin with the raw amino-acid sequence, 550 residues long: MLQTIPMPSRELTIALAVLSLLMVLVQRAGSRRRETKQLLSLPPSPPCANIIAGHLPTVLKAAKEHRQHLLFQKWAEEYGEVFFVQLGTIQEYFINSDQAVRAIFDKAAAQTSERPRWIVSNEQICNRLNLLLLSSSEKAWKSQRKATTFGLTNLNLADAGLPFLHFETLKFLNDIGQNPSKGADPQSLWSSIGRYTYSTFSSQIFGLDVPEDNSPVIDYIFETGLAQILGMLPGYYLVDTFNILDKLPLFLKPWERDAKSRHKRDYEWCCDKLKKVKSQIDAGEAPPHMTFIRRVIEDPNHLGLDSLEDASYLGMMLIIGASDTSRISTWSFLEAMLTFPDVCNKARKVIDSAVGDRVPVFEDLERVPYIRQVMKESWRWRPPVALGHPHTTTRDIMYKNYRIPKGARIHLNAWAIHRDPTRYPDPENFIPERFEGDTRSSQESAASPDVSKRDHFVFGAGRRICPGYHVADRSFAVSVMRILWAFDISLKPGTKLPLDPQSFPGDMPGNPGLELPVVLTVRSPERLETIQKEFEAAVQSRERMEPLVG.

Residues methionine 1–serine 31 form the signal peptide. Basic and acidic residues predominate over residues phenylalanine 430 to serine 441. Residues phenylalanine 430 to valine 451 are disordered. Residue cysteine 466 participates in heme binding.

This sequence belongs to the cytochrome P450 family.

Cytochrome P450 monooxygenase; part of the DMATS1 gene cluster that mediates the biosynthesis of a reversely N-prenylated monomeric L-tryptophan (r-N-DMAT). Seems not to contribute to the final DMATS1 product. This chain is Cytochrome P450 monooxygenase FFUJ_09176, found in Gibberella fujikuroi (strain CBS 195.34 / IMI 58289 / NRRL A-6831) (Bakanae and foot rot disease fungus).